Reading from the N-terminus, the 788-residue chain is Serine/threonine-protein kinase MARK2 (788 aa).

Residues 1 to 46 (MSSARTPLPTLNERDTEQPTLGHLDSKPSSKSNMIRGRNSATSADE) are disordered. Residues 27-45 (KPSSKSNMIRGRNSATSAD) are compositionally biased toward polar residues. Serine 40 is subject to Phosphoserine. The Protein kinase domain occupies 53–304 (YRLLKTIGKG…LEQIMKDRWM (252 aa)). The residue at position 58 (threonine 58) is a Phosphothreonine; by autocatalysis. Residues 59-67 (IGKGNFAKV) and lysine 82 each bind ATP. 3 positions are modified to phosphoserine; by CaMK1: serine 91, serine 92, and serine 93. The Proton acceptor role is filled by aspartate 175. A Phosphothreonine; by LKB1 and TAOK1 modification is found at threonine 208. Residue serine 212 is modified to Phosphoserine; by GSK3-beta. Serine 274 is modified (phosphoserine; by autocatalysis). Threonine 275 is modified (phosphothreonine; by autocatalysis). At threonine 294 the chain carries Phosphothreonine; by CaMK1. The UBA domain occupies 323 to 362 (YKDPRRTELMVSMGYTREEIQDSLVGQRYNEVMATYLLLG). The disordered stretch occupies residues 373 to 632 (ITLKPRPSAD…HSQGRRGASG (260 aa)). Phosphoserine occurs at positions 376 and 409. Residues 418–432 (PTSNSYSKKTQSNNA) show a composition bias toward polar residues. A compositionally biased stretch (basic and acidic residues) spans 433-445 (ENKRPEEDRESGR). Serine 456 carries the post-translational modification Phosphoserine. Phosphothreonine is present on threonine 467. The segment covering 467–486 (TPTPSTNSVLSTSTNRSRNS) has biased composition (polar residues). Phosphoserine occurs at positions 486 and 493. Residues 495-504 (GQASIQNGKD) are compositionally biased toward polar residues. Residues 511–525 (SRASTASASAAVSAA) show a composition bias toward low complexity. Serine 569, serine 571, and serine 592 each carry phosphoserine. Phosphothreonine; by PKC/PRKCZ is present on threonine 596. Phosphoserine is present on residues serine 619 and serine 722. The 50-residue stretch at 739 to 788 (TPGHEDFVQWEMEVCKLPRLSLNGVRFKRISGTSMAFKNIASKIANELKL) folds into the KA1 domain.

This sequence belongs to the protein kinase superfamily. CAMK Ser/Thr protein kinase family. SNF1 subfamily. As to quaternary structure, homodimer. Interacts with PAK5; leading to inhibit the protein kinase activity. Interacts with MAPT/TAU. Interacts with MTCL1 isoform 1; the interaction is direct and increases MARK2 microtubule-binding ability. Interacts (when phosphorylated at Thr-596) with YWHAZ. Interacts with YWHAB, YWHAG and YWHAQ. (Microbial infection) In case of infection, interacts with H.pylori CagA, leading to inhibit kinase activity and junctional and polarity defects. Mg(2+) is required as a cofactor. In terms of processing, autophosphorylated. Phosphorylated at Thr-208 by STK11/LKB1 in complex with STE20-related adapter-alpha (STRADA) pseudo kinase and CAB39. Phosphorylation at Thr-208 by TAOK1 activates the kinase activity, leading to phosphorylation and detachment of MAPT/TAU from microtubules. Phosphorylation at Ser-212 by GSK3-beta (GSK3B) inhibits the kinase activity. Phosphorylation by CaMK1 promotes activity and is required to promote neurite outgrowth. Phosphorylation at Thr-596 by PRKCZ/aPKC in polarized epithelial cells inhibits the kinase activity and promotes binding to 14-3-3 protein YWHAZ, leading to relocation from cell membrane to cytoplasm. High levels of expression in heart, brain, skeletal muscle and pancreas, lower levels observed in lung, liver and kidney.

It localises to the cell membrane. Its subcellular location is the cytoplasm. The protein localises to the lateral cell membrane. The protein resides in the cytoskeleton. It is found in the cell projection. It localises to the dendrite. The catalysed reaction is L-seryl-[protein] + ATP = O-phospho-L-seryl-[protein] + ADP + H(+). It catalyses the reaction L-threonyl-[protein] + ATP = O-phospho-L-threonyl-[protein] + ADP + H(+). The enzyme catalyses L-seryl-[tau protein] + ATP = O-phospho-L-seryl-[tau protein] + ADP + H(+). It carries out the reaction L-threonyl-[tau protein] + ATP = O-phospho-L-threonyl-[tau protein] + ADP + H(+). Its activity is regulated as follows. Inhibited by PAK5; inhibition is independent of the kinase activity of PAK5. Activated by phosphorylation on Thr-208. Inhibited by phosphorylation at Ser-212 and Thr-596. Inhibited by hymenialdisine. Specifically inhibited by the H.pylori CagA peptide FPLKRHDKVDDLSK that mimics host substrates and binds to the kinase substrate-binding site. Serine/threonine-protein kinase. Involved in cell polarity and microtubule dynamics regulation. Phosphorylates CRTC2/TORC2, DCX, HDAC7, KIF13B, MAP2, MAP4 and RAB11FIP2. Phosphorylates the microtubule-associated protein MAPT/TAU. Plays a key role in cell polarity by phosphorylating the microtubule-associated proteins MAP2, MAP4 and MAPT/TAU at KXGS motifs, causing detachment from microtubules, and their disassembly. Regulates epithelial cell polarity by phosphorylating RAB11FIP2. Involved in the regulation of neuronal migration through its dual activities in regulating cellular polarity and microtubule dynamics, possibly by phosphorylating and regulating DCX. Regulates axogenesis by phosphorylating KIF13B, promoting interaction between KIF13B and 14-3-3 and inhibiting microtubule-dependent accumulation of KIF13B. Also required for neurite outgrowth and establishment of neuronal polarity. Regulates localization and activity of some histone deacetylases by mediating phosphorylation of HDAC7, promoting subsequent interaction between HDAC7 and 14-3-3 and export from the nucleus. Also acts as a positive regulator of the Wnt signaling pathway, probably by mediating phosphorylation of dishevelled proteins (DVL1, DVL2 and/or DVL3). Modulates the developmental decision to build a columnar versus a hepatic epithelial cell apparently by promoting a switch from a direct to a transcytotic mode of apical protein delivery. Essential for the asymmetric development of membrane domains of polarized epithelial cells. This Homo sapiens (Human) protein is Serine/threonine-protein kinase MARK2.